The sequence spans 433 residues: Ribonuclease T2-like (433 aa).

Disulfide bonds link cysteine 28/cysteine 47, cysteine 36/cysteine 95, cysteine 46/cysteine 171, and cysteine 103/cysteine 163. Residues asparagine 38 and asparagine 71 are each glycosylated (N-linked (GlcNAc...) asparagine). Active-site residues include histidine 88, glutamate 156, and histidine 160. N-linked (GlcNAc...) asparagine glycosylation is found at asparagine 221 and asparagine 263. An intrachain disulfide couples cysteine 247 to cysteine 283.

Belongs to the RNase T2 family.

It is found in the vacuole lumen. The protein resides in the cytoplasm. It carries out the reaction a ribonucleotidyl-ribonucleotide-RNA + H2O = a 3'-end 3'-phospho-ribonucleotide-RNA + a 5'-end dephospho-ribonucleoside-RNA + H(+). Functionally, rnase which modulates cell survival under stress conditions. Released from the vacuole to the cytoplasm during stress to promote tRNA and rRNA cleavage and to activate separately a downstream pathway that promotes cell death. Involved in cell size, vacuolar morphology and growth at high temperatures and high salt concentration. This Candida glabrata (strain ATCC 2001 / BCRC 20586 / JCM 3761 / NBRC 0622 / NRRL Y-65 / CBS 138) (Yeast) protein is Ribonuclease T2-like (RNY1).